A 486-amino-acid polypeptide reads, in one-letter code: Malonate-semialdehyde dehydrogenase 2 (486 aa).

The NAD(+) site is built by Phe-154, Lys-178, Glu-181, Arg-182, and Ser-231. Cys-286 (nucleophile) is an active-site residue. Residue Glu-386 participates in NAD(+) binding.

It belongs to the aldehyde dehydrogenase family. IolA subfamily. In terms of assembly, homotetramer.

It carries out the reaction 3-oxopropanoate + NAD(+) + CoA + H2O = hydrogencarbonate + acetyl-CoA + NADH + H(+). The catalysed reaction is 2-methyl-3-oxopropanoate + NAD(+) + CoA + H2O = propanoyl-CoA + hydrogencarbonate + NADH + H(+). The protein operates within polyol metabolism; myo-inositol degradation into acetyl-CoA; acetyl-CoA from myo-inositol: step 7/7. Functionally, catalyzes the oxidation of malonate semialdehyde (MSA) and methylmalonate semialdehyde (MMSA) into acetyl-CoA and propanoyl-CoA, respectively. Is involved in a myo-inositol catabolic pathway. Bicarbonate, and not CO2, is the end-product of the enzymatic reaction. The chain is Malonate-semialdehyde dehydrogenase 2 from Oceanobacillus iheyensis (strain DSM 14371 / CIP 107618 / JCM 11309 / KCTC 3954 / HTE831).